We begin with the raw amino-acid sequence, 304 residues long: Ribosomal RNA small subunit methyltransferase H (304 aa).

S-adenosyl-L-methionine is bound by residues 37-39, D57, F79, D100, and H107; that span reads GGH.

It belongs to the methyltransferase superfamily. RsmH family.

It localises to the cytoplasm. It carries out the reaction cytidine(1402) in 16S rRNA + S-adenosyl-L-methionine = N(4)-methylcytidine(1402) in 16S rRNA + S-adenosyl-L-homocysteine + H(+). Specifically methylates the N4 position of cytidine in position 1402 (C1402) of 16S rRNA. This is Ribosomal RNA small subunit methyltransferase H from Bacteroides fragilis (strain YCH46).